The following is a 299-amino-acid chain: Ribonuclease 3-like protein 3 (299 aa).

Positions 39–183 (VAAVESLLGY…LIGAIYCDSN (145 aa)) constitute an RNase III domain. Mg(2+)-binding residues include glutamate 79, aspartate 169, and glutamate 172. The 65-residue stretch at 209–273 (HPVSELFEFC…AKAALDKLKE (65 aa)) folds into the DRBM domain. The tract at residues 274–299 (TLGQSQTEPMSAEVSEQFNKIDLTGS) is disordered. A compositionally biased stretch (polar residues) spans 275 to 291 (LGQSQTEPMSAEVSEQF).

Mg(2+) serves as cofactor. It depends on Mn(2+) as a cofactor.

Functionally, cleaves double-stranded RNA (dsRNA). The sequence is that of Ribonuclease 3-like protein 3 from Oryza sativa subsp. japonica (Rice).